Consider the following 173-residue polypeptide: Bifunctional protein PyrR (173 aa).

The PRPP-binding signature appears at 94–106 (VILIDDVLYTGRT).

The protein belongs to the purine/pyrimidine phosphoribosyltransferase family. PyrR subfamily. In terms of assembly, homodimer and homohexamer; in equilibrium.

It catalyses the reaction UMP + diphosphate = 5-phospho-alpha-D-ribose 1-diphosphate + uracil. Regulates transcriptional attenuation of the pyrimidine nucleotide (pyr) operon by binding in a uridine-dependent manner to specific sites on pyr mRNA. This disrupts an antiterminator hairpin in the RNA and favors formation of a downstream transcription terminator, leading to a reduced expression of downstream genes. In terms of biological role, also displays a weak uracil phosphoribosyltransferase activity which is not physiologically significant. The chain is Bifunctional protein PyrR from Streptococcus gordonii (strain Challis / ATCC 35105 / BCRC 15272 / CH1 / DL1 / V288).